A 479-amino-acid chain; its full sequence is Endosomal/lysosomal proton channel TMEM175 (479 aa).

The interval 1-26 (MSGPQAPEPTLEGQADASAGSPDEDA) is disordered. Over 1 to 33 (MSGPQAPEPTLEGQADASAGSPDEDAAEGIQHS) the chain is Cytoplasmic. A helical membrane pass occupies residues 34–56 (HRMLSFSDALLSIIATVMEFDKS). A RxxxFSD motif 1 motif is present at residues 35-41 (RMLSFSD). The short helix H2-1 stretch occupies residues 52-58 (EFDKSVQ). Residues 57 to 64 (VQRLLATR) lie on the Lumenal side of the membrane. A helical membrane pass occupies residues 65–87 (IAVYLMTFLIVTVAWAAHTRLFQ). Residues 88 to 93 (VVGKID) lie on the Cytoplasmic side of the membrane. Residues 94–103 (DTLALLNLFS) form a helical membrane-spanning segment. The Lumenal segment spans residues 104–113 (LMVTFPEVPL). The chain crosses the membrane as a helical span at residues 114–135 (GIFLFCMCVIAIGAVQALIVLY). The Cytoplasmic segment spans residues 136-159 (AFHFPHLLSPQIERSAHRGLYRQR). Residues 160-180 (VLGIIVRGPALCLAAAGFSLF) traverse the membrane as a helical segment. The Lumenal segment spans residues 181–185 (FYPAS). Residues 186–205 (YLLMAMVIVLPHVSKAAGWC) form a helical membrane-spanning segment. The Cytoplasmic segment spans residues 206 to 232 (RAQLVGPREPPAHSVEVFTFDLHEPLS). Residues 233–257 (KERVEAFSDGVYAIVATLLILDICE) traverse the membrane as a helical segment. Positions 235–241 (RVEAFSD) match the RxxxFSD motif 2 motif. Residues 258-284 (DNVPDAKDVKEKFQGSLVAALGESGPH) lie on the Lumenal side of the membrane. The short helix H1-2 stretch occupies residues 263-271 (AKDVKEKFQ). Residues 273 to 279 (SLVAALG) form a short helix H2-2 region. A helical transmembrane segment spans residues 285-307 (FLAYFGSFATVGLLWFAHHSLFL). Over 308 to 313 (HIRRAT) the chain is Cytoplasmic. Residues 314–335 (QPMGLLNTLSLAFVGGLPLAYQ) traverse the membrane as a helical segment. The Lumenal portion of the chain corresponds to 336–350 (QTSAFTKQPRDELES). A helical membrane pass occupies residues 351–371 (VRISCAIIFLASIFQFAIWTT). At 372–391 (ALLQEGETLQPSARFGGREH) the chain is on the cytoplasmic side. Residues 392 to 415 (AFMFAKLALYPCASLLAFACTCVL) traverse the membrane as a helical segment. Over 416–417 (SS) the chain is Lumenal. Residues 418-444 (FSTAIFHAMQIAVPFAFLLLRLLVRLA) form a helical membrane-spanning segment. Topologically, residues 445 to 479 (LAGLRALRGLVGPVLARPAPGAADEAQSPLLPAPC) are cytoplasmic.

The protein belongs to the TMEM175 family. Homodimer. Interacts with AKT (AKT1, AKT2 or AKT3); leading to formation of the lysoK(GF) complex, which activates the channel. Interacts with LAMP1; inhibiting the proton channel activity of TMEM175. Interacts with LAMP2; inhibiting the proton channel activity of TMEM175.

The protein resides in the endosome membrane. The protein localises to the lysosome membrane. It catalyses the reaction H(+)(in) = H(+)(out). The enzyme catalyses K(+)(in) = K(+)(out). Its activity is regulated as follows. Active at low pH (under pH 4.6): proton channel activity is activated by luminal side protons. Polyunsaturated fatty acids, such as arachidonic acid, also activate the channel activity. Proton channel activity is directly inhibited by LAMP1 or LAMP2, facilitating lysosomal acidification. Channel activity is activated following interaction with AKT (AKT1, AKT2 or AKT3): interaction promotes activation from closed to an open state. Activation by AKT is independent of AKT serine/threonine-protein kinase activity. Functionally, proton-activated proton channel that catalyzes proton efflux from endosomes and lysosomes to maintain a steady-state pH. Activated at low pH (under pH 4.6) by luminal side protons: selectively mediates lysosomal proton release from lysosomes, eliciting a proton leak that balances V-ATPase activity to maintain pH homeostasis. Regulation of lumenal pH stability is required for autophagosome-lysosome fusion. Also acts as a potassium channel at higher pH, regulating potassium conductance in endosomes and lysosomes. Constitutes the pore-forming subunit of the lysoK(GF) complex, a complex activated by extracellular growth factors. The lysoK(GF) complex is composed of TMEM175 and AKT (AKT1, AKT2 or AKT3), a major target of growth factor receptors: in the complex, TMEM175 channel is opened by conformational changes by AKT, leading to its activation. The lysoK(GF) complex is required to protect neurons against stress-induced damage. The protein is Endosomal/lysosomal proton channel TMEM175 of Bos taurus (Bovine).